Reading from the N-terminus, the 481-residue chain is Phosphoglycerate kinase 1, chloroplastic (481 aa).

Residues 1-75 (MASAAASSAF…VRGKGSRGVV (75 aa)) constitute a chloroplast transit peptide. Phosphoserine is present on Ser81. (2R)-3-phosphoglycerate is bound by residues Ala99, Asp100, Asn102, Arg116, Thr138, His139, Gly141, Arg142, Arg197, His229, and Arg230. Position 275 (Gly275) interacts with ADP. Gly275 is a binding site for CDP. AMP-binding residues include Lys277 and Lys281. ATP is bound at residue Lys281. Gly299 is an ADP binding site. Position 299 (Gly299) interacts with CDP. Residues Gly300 and Gly372 each contribute to the AMP site. ATP is bound by residues Gly300 and Gly372. Residues Gly397 and Phe402 each contribute to the CDP site. Position 402 (Phe402) interacts with ADP. Glu403 is a binding site for AMP. The ATP site is built by Glu403, Asp434, and Ser435. Asp434 is a binding site for Mg(2+).

The protein belongs to the phosphoglycerate kinase family. Monomer. Binds to FTSZ2-1 and FTSZ2-2. Mg(2+) serves as cofactor.

Its subcellular location is the plastid. It localises to the chloroplast. It carries out the reaction (2R)-3-phosphoglycerate + ATP = (2R)-3-phospho-glyceroyl phosphate + ADP. Its pathway is carbohydrate biosynthesis; Calvin cycle. Its function is as follows. May trigger the phosphorylation of FTSZ2-1 and FTSZ2-2. The protein is Phosphoglycerate kinase 1, chloroplastic of Arabidopsis thaliana (Mouse-ear cress).